The sequence spans 155 residues: Ribosomal RNA large subunit methyltransferase H (155 aa).

S-adenosyl-L-methionine contacts are provided by residues leucine 72, glycine 103, and 122–127; that span reads LSALTL.

The protein belongs to the RNA methyltransferase RlmH family. As to quaternary structure, homodimer.

Its subcellular location is the cytoplasm. The catalysed reaction is pseudouridine(1915) in 23S rRNA + S-adenosyl-L-methionine = N(3)-methylpseudouridine(1915) in 23S rRNA + S-adenosyl-L-homocysteine + H(+). Specifically methylates the pseudouridine at position 1915 (m3Psi1915) in 23S rRNA. The chain is Ribosomal RNA large subunit methyltransferase H from Enterobacter sp. (strain 638).